The following is a 197-amino-acid chain: uncharacterized protein (197 aa).

A run of 6 helical transmembrane segments spans residues 11 to 31 (AAMVRTGILGFGGGPSVIPLI), 50 to 70 (ILAIANALPGPIATKMAAYLG), 79 to 99 (AIVAILAHILPTCLAMVGLFA), 108 to 128 (AIVAGMIGAVTPVIAVMLGIM), 136 to 156 (ALKGFGWVTGILFFIIAFIGL), and 158 to 178 (TLQINPGLVIIIFLAYGAFHF).

The protein belongs to the chromate ion transporter (CHR) (TC 2.A.51) family.

The protein localises to the cell membrane. This is an uncharacterized protein from Bacillus subtilis (strain 168).